Reading from the N-terminus, the 381-residue chain is MKRLTILGSTGSIGTQTLDIVRQNPEQLEVFALAAGKNVQEIELQAREFKPRIIGLMEEKAARELKQRVADLDIEVVSGMEGLLRTVTDEVPDTVVTAISGRIGLEPTMEALKVGKDIALANKETLVAGGDLVMGTAQRLGRTILPVDSEHSAIFQCLEEDPRTLDKIILTASGGPFRGWSEEQLQEVTPERALQHPNWAMGAKITIDSATMMNKGLEVIEAHHLFHMEYDQIDVLIHPQSVIHSMVQYCDGSVLAQCGRPDMRLPIQYALTYPTRWPNPFERLDLRGKTLTFFDPEDYDFPALKLAYACGKRGGTLPAVMNAANEVAVHAFLARRVAYLEIIGLVDKVCSEHDVLDATDLETILNADHWARIRTEELIHG.

Residues Thr10, Gly11, Ser12, Ile13, Gly36, Lys37, Asn38, and Asn122 each contribute to the NADPH site. Residue Lys123 participates in 1-deoxy-D-xylulose 5-phosphate binding. Glu124 lines the NADPH pocket. Asp148 is a binding site for Mn(2+). The 1-deoxy-D-xylulose 5-phosphate site is built by Ser149, Glu150, Ser173, and His196. Glu150 serves as a coordination point for Mn(2+). Gly202 provides a ligand contact to NADPH. The 1-deoxy-D-xylulose 5-phosphate site is built by Ser209, Asn214, Lys215, and Glu218. Glu218 is a Mn(2+) binding site.

The protein belongs to the DXR family. Requires Mg(2+) as cofactor. Mn(2+) is required as a cofactor.

The catalysed reaction is 2-C-methyl-D-erythritol 4-phosphate + NADP(+) = 1-deoxy-D-xylulose 5-phosphate + NADPH + H(+). It functions in the pathway isoprenoid biosynthesis; isopentenyl diphosphate biosynthesis via DXP pathway; isopentenyl diphosphate from 1-deoxy-D-xylulose 5-phosphate: step 1/6. Its function is as follows. Catalyzes the NADPH-dependent rearrangement and reduction of 1-deoxy-D-xylulose-5-phosphate (DXP) to 2-C-methyl-D-erythritol 4-phosphate (MEP). This Desulfitobacterium hafniense (strain Y51) protein is 1-deoxy-D-xylulose 5-phosphate reductoisomerase.